The sequence spans 798 residues: Probable G-protein coupled receptor 156 (798 aa).

Over 1–49 (MEPEINCSEFCDSFPGQELDRRPLHDLCKTTITESQHSSTAASPLSPAL) the chain is Extracellular. Asparagine 6 carries N-linked (GlcNAc...) asparagine glycosylation. Residues 50–70 (LGIMWTFLSCGLLLVLFFLAF) traverse the membrane as a helical segment. Topologically, residues 71-86 (TIRCRKNRIVKMSSPN) are cytoplasmic. A helical transmembrane segment spans residues 87–107 (LNVVTLLGSCLTYISAYLFGI). Over 108–118 (QDALEGSSVEA) the chain is Extracellular. A helical transmembrane segment spans residues 119–139 (LIQTRLSLLCIGTSLVFGPIL). Residues 140-164 (GKSWRLYKVFTQRVPDKRVIIKDLQ) lie on the Cytoplasmic side of the membrane. A helical transmembrane segment spans residues 165–185 (LLGLVAALVVADVILLVTWVL). Over 186-222 (TDPIQCLQMLGVSMKVTGRDVSCSLTNTHFCASRYSD) the chain is Extracellular. A helical transmembrane segment spans residues 223–243 (VWIALVLGCKGLLLLYGAYLA). Topologically, residues 244–257 (GLTNHVSSPPVNQS) are cytoplasmic. Residues 258–278 (LTIMVGVNLLLLTAGLLFVVT) traverse the membrane as a helical segment. Over 279 to 288 (RYLHSWPNLV) the chain is Extracellular. The helical transmembrane segment at 289–309 (FGLTSGGIFVCTTTVNCCVFI) threads the bilayer. Over 310-798 (PQLKQWKAFE…FKDDLKPTLV (489 aa)) the chain is Cytoplasmic. Residues 353–390 (DEKSCMERLLTEKNAVIESLQEQVSNAKEKLVKLMSAE) are a coiled coil. 3 disordered regions span residues 441–497 (HVQG…PMAP), 546–666 (SEAP…KQCE), and 693–715 (PAAPCLPSSPALPRQRQPRPRLS). Residues 479-492 (PKAEQSEGPERGDQ) are compositionally biased toward basic and acidic residues. The span at 559–572 (LWKSTTSRSPQKLS) shows a compositional bias: polar residues. Residues 583–594 (VRRRRAAQRARS) are compositionally biased toward basic residues. Residues 606–624 (HQANSTVSSSQSGLIVQNR) are compositionally biased toward polar residues. Low complexity predominate over residues 639–648 (PRSSSVKPSP).

It belongs to the G-protein coupled receptor 3 family. GABA-B receptor subfamily. Expressed in the outer and inner hair cells of the organ of Corti (at protein level). Expressed in the utricle and saccule within the vestibule (at protein level).

It localises to the cell membrane. The protein resides in the postsynaptic cell membrane. Its function is as follows. Orphan G-protein coupled receptor involved in the regulation of hair cell orientation in mechanosensory organs of the inner ear. It is required to trigger a 180 degree reversal in hair cell orientation, creating a virtual line of polarity reversal (LPR) across which stereociliary bundles are arranged in opposite orientations. In Mus musculus (Mouse), this protein is Probable G-protein coupled receptor 156 (Gpr156).